A 690-amino-acid polypeptide reads, in one-letter code: Glycine--tRNA ligase beta subunit (690 aa).

Belongs to the class-II aminoacyl-tRNA synthetase family. In terms of assembly, tetramer of two alpha and two beta subunits.

The protein resides in the cytoplasm. The enzyme catalyses tRNA(Gly) + glycine + ATP = glycyl-tRNA(Gly) + AMP + diphosphate. The chain is Glycine--tRNA ligase beta subunit from Desulfitobacterium hafniense (strain Y51).